The primary structure comprises 88 residues: Meiosis-expressed gene 1 protein (88 aa).

This sequence belongs to the MEIG1 family. As to quaternary structure, interacts with PACRG. Interacts with MORN3. As to expression, expressed in the testes (at protein level). Expressed in the ovary. Several isoforms have been identified differing in their 5'-untranslated exons. These isoforms show different tissue expression. Some are expressed in various tissues, including lung, liver, brain, testis, oviduct and oocytes. Some are testis-specific.

Its function is as follows. Essential for spermiogenesis. This is Meiosis-expressed gene 1 protein from Mus musculus (Mouse).